Here is a 294-residue protein sequence, read N- to C-terminus: MYFQDIIFMLQKYWSSRGCVIAQPMDIECGAGTFNPATFLRVIGPEPWSVAYIEPSRRPTDGRYGENPNRLQSYFQFQVVLKPSPDDIIEQYLGSLQILGIDSTLHDIRFVEDDWESPTLGAWGLGWEIWLDGMEVTQFTYFQQVGGIDLEPISVELTYGLERLAMYLQEKDSVYDLQWNEYVTYGQMYHQNEVEQSSYNFDESDVSMLLKLFKDFDNECRQLIKKGFVWPAYDYCLKCSHTFNLLDARGAISTTERASYISKVRALASSIAKLYALQREKMGYPMLLKGSGEI.

It belongs to the class-II aminoacyl-tRNA synthetase family. As to quaternary structure, tetramer of two alpha and two beta subunits.

Its subcellular location is the cytoplasm. It carries out the reaction tRNA(Gly) + glycine + ATP = glycyl-tRNA(Gly) + AMP + diphosphate. The protein is Glycine--tRNA ligase alpha subunit of Lawsonia intracellularis (strain PHE/MN1-00).